The primary structure comprises 103 residues: Large ribosomal subunit protein bL21 (103 aa).

This sequence belongs to the bacterial ribosomal protein bL21 family. Part of the 50S ribosomal subunit. Contacts protein L20.

Its function is as follows. This protein binds to 23S rRNA in the presence of protein L20. The protein is Large ribosomal subunit protein bL21 of Acidithiobacillus ferrooxidans (strain ATCC 23270 / DSM 14882 / CIP 104768 / NCIMB 8455) (Ferrobacillus ferrooxidans (strain ATCC 23270)).